We begin with the raw amino-acid sequence, 225 residues long: Cytidylate kinase (225 aa).

11-19 contacts ATP; the sequence is GPAAAGKST.

This sequence belongs to the cytidylate kinase family. Type 1 subfamily.

Its subcellular location is the cytoplasm. The catalysed reaction is CMP + ATP = CDP + ADP. It carries out the reaction dCMP + ATP = dCDP + ADP. The polypeptide is Cytidylate kinase (Anoxybacillus flavithermus (strain DSM 21510 / WK1)).